Consider the following 959-residue polypeptide: Ataxin-2 homolog (959 aa).

One can recognise a Sm domain in the interval 13–92 (DVLSAINDMI…IVDFAYVTQE (80 aa)). 5 disordered regions span residues 203-378 (AREI…GSRV), 392-484 (TAPK…SVIT), 501-528 (PRVA…HPAM), 697-831 (PPQG…QHIQ), and 867-959 (PMQQ…QSPP). The segment covering 226 to 235 (DLDKITRQED) has biased composition (basic and acidic residues). Over residues 246–260 (NNSFNQQQQQRRNPN) the composition is skewed to low complexity. A compositionally biased stretch (basic and acidic residues) spans 270–281 (RRAEGLRGDRRN). Over residues 282–313 (SGSSSANNSRYGAPAAAQQNYSQNQQQQQGQK) the composition is skewed to low complexity. 2 stretches are compositionally biased toward polar residues: residues 341-356 (RQQQ…NNNV) and 473-484 (VSVTSENDSVIT). 3 stretches are compositionally biased toward low complexity: residues 504-528 (APAT…HPAM), 697-707 (PPQGQQQQPRY), and 715-725 (QQQQQQPQQQQ). Polar residues-rich tracts occupy residues 726-742 (FSGE…SQPT) and 756-765 (APQNGNMQAE). Low complexity predominate over residues 766-788 (SSSNASHSGSTSSQSGQRSGSPP). Positions 789-798 (GAVPPPPPPQ) are enriched in pro residues. 3 stretches are compositionally biased toward low complexity: residues 822–831 (MMQQQQQHIQ), 867–876 (PMQQNQHPQQ), and 902–911 (QQQQQQQQQQ). A compositionally biased stretch (polar residues) spans 912 to 922 (MHRQNSLPQQF). Residues 923-935 (QGNQGVNPSGQQS) show a composition bias toward low complexity. A compositionally biased stretch (polar residues) spans 948-959 (TPRDQQHSQSPP).

It belongs to the ataxin-2 family. Interacts (via C-terminus) with szy-20 (via C-terminus); the interaction is RNA independent. Interacts with pab-1. Interacts with gdi-1. Expressed in the central nervous system, dorsal and ventral nerve cord, intestinal lining and body-wall muscle. Expressed in the gonad.

The protein localises to the cytoplasm. It localises to the nucleus. Functionally, probable RNA-binding protein that negatively regulates the translation of targets. Functions with RNA-binding protein szy-20 to ensure embryonic cell division, and to this end, plays a role in the regulation of centrosome assembly, position and size, and in astral microtubule outgrowth and nucleation. Required for gonad development, germ cell proliferation and for the production of oocytes. Regulates whole body growth and fat accumulation in response to food availability, and this may be through the mTOR pathway, upstream of daf-15 and rheb-1. This is Ataxin-2 homolog from Caenorhabditis elegans.